The chain runs to 1573 residues: Soluble scavenger receptor cysteine-rich domain-containing protein SSC5D (1573 aa).

Residues 1–16 form the signal peptide; the sequence is MRVLACLLAALVGIQA. Residues 20–120 enclose the SRCR 1 domain; sequence LRLADGPHGC…HEEDAGVVCA (101 aa). 3 disulfides stabilise this stretch: Cys-45–Cys-109, Cys-58–Cys-119, and Cys-89–Cys-99. The segment at 153 to 192 is disordered; the sequence is EPLVTHAPRPAGNPQNASRKKSPRPKQAKSTRAPLLTTGA. The N-linked (GlcNAc...) asparagine glycan is linked to Asn-168. Residues 170-181 show a composition bias toward basic residues; that stretch reads SRKKSPRPKQAK. 2 consecutive SRCR domains span residues 198 to 298 and 304 to 404; these read LRLV…LVCT and LRLA…AVCD. Intrachain disulfides connect Cys-223–Cys-287, Cys-236–Cys-297, Cys-267–Cys-277, Cys-329–Cys-393, Cys-342–Cys-403, and Cys-373–Cys-383. Residues Asn-376 and Asn-420 are each glycosylated (N-linked (GlcNAc...) asparagine). Residues 412 to 465 are disordered; it reads PPTAPTDSNNSTPREAASRPPSTMTSQAPGTAGVSPPPASPTVLWEPGPEAGSP. Residues 431 to 440 show a composition bias toward polar residues; that stretch reads PPSTMTSQAP. Residues 467–568 enclose the SRCR 4 domain; sequence LRLVAGPSKC…HNEDVGVTCT (102 aa). 3 cysteine pairs are disulfide-bonded: Cys-492–Cys-557, Cys-505–Cys-567, and Cys-537–Cys-547. Positions 614-769 are disordered; that stretch reads EKTTTKAPGK…SVSTTGESGL (156 aa). Positions 626–637 are enriched in basic residues; sequence KSTKKWVTKNAK. Residues 654-671 are compositionally biased toward polar residues; that stretch reads AQSPPDLTSQTTAALTTE. Over residues 672-685 the composition is skewed to basic and acidic residues; the sequence is ASRRPTSEFTRRPT. Polar residues-rich tracts occupy residues 687-702 and 711-735; these read EAPQ…TLTP and KTMA…SIPQ. The region spanning 772 to 872 is the SRCR 5 domain; it reads VRLADGPNRC…HEEDVGLTCT (101 aa). Cystine bridges form between Cys-797-Cys-861, Cys-810-Cys-871, and Cys-841-Cys-851. 2 disordered regions span residues 895–1475 and 1554–1573; these read KGTT…PCVA and MPAP…RGDV. Positions 924–934 are enriched in basic and acidic residues; the sequence is RLPDTGSKDGY. 2 stretches are compositionally biased toward pro residues: residues 1004-1020 and 1083-1093; these read PPTP…PPGP and TPEPSPTPLPT. A compositionally biased stretch (polar residues) spans 1101 to 1140; sequence DPSTPSEVTSLSPTSEQVPESDTTPDLDTTPYSSTVSEYS. Over residues 1144–1160 the composition is skewed to pro residues; sequence DPSPSPHPTTTPDPTMA. Low complexity-rich tracts occupy residues 1161-1175 and 1185-1277; these read PDPI…TPHF and PHPT…MPHP. Residues 1278–1328 show a composition bias toward pro residues; the sequence is TTTPHPTTTPHPTTTPHPTTTPHPTMTPDPTTTPYPTTTPDPTTTPHPTTP. Polar residues-rich tracts occupy residues 1335 to 1354 and 1364 to 1380; these read VITT…SPTL and PQLT…TSQI. Over residues 1381-1401 the composition is skewed to low complexity; sequence PTLEPSPALESSPSRSSTATS. A compositionally biased stretch (pro residues) spans 1464 to 1475; that stretch reads GQSPGPHGPCVA.

In terms of assembly, interacts with LGALS1 and laminin. As to expression, highly expressed in monocytes/macrophages and T-lymphocytes. Highly expressed in placenta and spleen, and also detected at lower levels in colon, and more weakly in lung, heart and kidney.

Its subcellular location is the secreted. It localises to the cytoplasm. Binds to extracellular matrix proteins. Binds to pathogen-associated molecular patterns (PAMPs) present on the cell walls of Gram-positive and Gram-negative bacteria and fungi, behaving as a pattern recognition receptor (PRR). Induces bacterial and fungal aggregation and subsequent inhibition of PAMP-induced cytokine release. Does not possess intrinsic bactericidal activity. May play a role in the innate defense and homeostasis of certain epithelial surfaces. This Homo sapiens (Human) protein is Soluble scavenger receptor cysteine-rich domain-containing protein SSC5D (SSC5D).